An 874-amino-acid chain; its full sequence is MKAAEIREKFLKFFESKGHTIVRSSSLVPGNDPTLLFTNSGMVQFKDVFLGAESRPYSRATTAQRSVRAGGKHNDLENVGYTARHHTFFEMLGNFSFGDYFKRDAIHYAWELLTGVYQLPKEKLWVTVYQEDDEAYDIWAKEVGVPAERIIRIGDNKGARYASDNFWQMADTGPCGPCSEIFYDHGPDVWGGPPGSPEEDGDRYIEIWNLVFMQFNRDAQGNMTPLPKQCVDTGMGLERIAAVLQHVHSNYEIDLFQALIKAAARETNIDDLSNNSLKVVADHIRACSFLIVDGVIPGNEGRGYVLRRIVRRAIRHGYKLGRKGSFFHKLVADLVAQMGGAYPELKDAEQRVTHVLRQEEERFFETIEHGMSILEGALADLDSKGGKTLDGEVAFKLHDTYGFPLDLTADVCRERGVTVDEPAFDEAMARQREQARAAGKFKMAQGLDYTGAKTTFHGYEEIVFDDARVTALYVDGASVNEVTKGQQAVVVLDHTPFYAESGGQVGDQGVLANASIRFGVVDTLKVQADVVGHHGTLEQGTLKVGDVVKAEIDAVRRARTARNHSATHLMHKALREVLGGHVQQKGSLVDADKTRFDFAHNAPMTDEQIRRVEEIVNAEVLANAPGIVRVMAYDEAVKGGAMALFGEKYGDEVRVLDLGFSRELCGGTHVNRTGDIGLFKIVMEGGVAAGIRRVEAITGDNAVRFVQELDARIHAAAAALKAQPSELTQRISMVQDQVKALEKELGALKSKLASSQGDELASQAIDVSGVQVLAATLEGADVKTLRETVDKLKDKLKSAAIVLASVEGGKVSLIAGVTADTSKKVKAGELVNFVAQQVGGKGGGRPDMAQAGGTEPANLPAALAGVKGWVEAQL.

Positions 564, 568, 665, and 669 each coordinate Zn(2+).

Belongs to the class-II aminoacyl-tRNA synthetase family. Requires Zn(2+) as cofactor.

Its subcellular location is the cytoplasm. The enzyme catalyses tRNA(Ala) + L-alanine + ATP = L-alanyl-tRNA(Ala) + AMP + diphosphate. Functionally, catalyzes the attachment of alanine to tRNA(Ala) in a two-step reaction: alanine is first activated by ATP to form Ala-AMP and then transferred to the acceptor end of tRNA(Ala). Also edits incorrectly charged Ser-tRNA(Ala) and Gly-tRNA(Ala) via its editing domain. The polypeptide is Alanine--tRNA ligase (Paraburkholderia phymatum (strain DSM 17167 / CIP 108236 / LMG 21445 / STM815) (Burkholderia phymatum)).